Consider the following 71-residue polypeptide: Putative membrane protein insertion efficiency factor (71 aa).

This sequence belongs to the UPF0161 family.

The protein resides in the cell membrane. Its function is as follows. Could be involved in insertion of integral membrane proteins into the membrane. The sequence is that of Putative membrane protein insertion efficiency factor from Desulforudis audaxviator (strain MP104C).